The chain runs to 89 residues: Elongation factor 1-beta (89 aa).

Belongs to the EF-1-beta/EF-1-delta family.

Promotes the exchange of GDP for GTP in EF-1-alpha/GDP, thus allowing the regeneration of EF-1-alpha/GTP that could then be used to form the ternary complex EF-1-alpha/GTP/AAtRNA. The sequence is that of Elongation factor 1-beta from Methanocella arvoryzae (strain DSM 22066 / NBRC 105507 / MRE50).